A 209-amino-acid polypeptide reads, in one-letter code: Nascent polypeptide-associated complex subunit alpha (209 aa).

Residues 1-21 show a composition bias toward basic and acidic residues; it reads MSNPRVEELPDEEPKKTTVQE. Disordered regions lie at residues 1–51 and 121–175; these read MSNP…HNRN and QLAS…DKDI. Residues 22-36 are compositionally biased toward acidic residues; that stretch reads HEDDSSDDSEVEEVG. The NAC-A/B domain occupies 49–114; the sequence is NRNEKKARKA…AKIEDVNAAA (66 aa). Basic and acidic residues predominate over residues 127-150; that stretch reads AEDHSGHNHGEPSKAVEADEKKED. A compositionally biased stretch (acidic residues) spans 151–166; sequence KEDDEDEEEEEEEEVD. Residues 170–209 enclose the UBA domain; it reads LEDKDIELVMTQANVSRNKAVKALKENDNDIVNSIMALSI.

The protein belongs to the NAC-alpha family. In terms of assembly, part of the nascent polypeptide-associated complex (NAC), consisting of EGD2 and EGD1. NAC associates with ribosomes via EGD1.

It is found in the cytoplasm. The protein localises to the nucleus. Functionally, component of the nascent polypeptide-associated complex (NAC), a dynamic component of the ribosomal exit tunnel, protecting the emerging polypeptides from interaction with other cytoplasmic proteins to ensure appropriate nascent protein targeting. The NAC complex also promotes mitochondrial protein import by enhancing productive ribosome interactions with the outer mitochondrial membrane and blocks the inappropriate interaction of ribosomes translating non-secretory nascent polypeptides with translocation sites in the membrane of the endoplasmic reticulum. EGD2 may also be involved in transcription regulation. The polypeptide is Nascent polypeptide-associated complex subunit alpha (EGD2) (Gibberella zeae (strain ATCC MYA-4620 / CBS 123657 / FGSC 9075 / NRRL 31084 / PH-1) (Wheat head blight fungus)).